Consider the following 171-residue polypeptide: Large ribosomal subunit protein uL10 (171 aa).

Belongs to the universal ribosomal protein uL10 family. As to quaternary structure, part of the ribosomal stalk of the 50S ribosomal subunit. The N-terminus interacts with L11 and the large rRNA to form the base of the stalk. The C-terminus forms an elongated spine to which L12 dimers bind in a sequential fashion forming a multimeric L10(L12)X complex.

Functionally, forms part of the ribosomal stalk, playing a central role in the interaction of the ribosome with GTP-bound translation factors. In Paramagnetospirillum magneticum (strain ATCC 700264 / AMB-1) (Magnetospirillum magneticum), this protein is Large ribosomal subunit protein uL10.